The following is a 359-amino-acid chain: Mineralocorticoid receptor (359 aa).

Positions 1–49 (FKRAVEGQHNYLCAGRNDCIIDKIRRKNCPACRVRKCLQAGMNLGARKS) form a DNA-binding region, nuclear receptor. The Zn(2+) site is built by C13, C19, C29, and C32. An NR C4-type zinc finger spans residues 13–37 (CAGRNDCIIDKIRRKNCPACRVRKC). Residues 48-96 (KSKKPGKLKGVNEDSTPTKEGGQTCPGSGGGYLSSGEKELSTSPTNALV) form a disordered region. A hinge region spans residues 50–107 (KKPGKLKGVNEDSTPTKEGGQTCPGSGGGYLSSGEKELSTSPTNALVPHGPGGGLVTP). Residues 108–339 (YLPPSICSVL…EFPEMLVEII (232 aa)) enclose the NR LBD domain. 2 residues coordinate 21-hydroxyprogesterone: N145 and Q151. Residues N145 and Q151 each coordinate aldosterone. Positions 145 and 151 each coordinate progesterone. The interval 157–160 (KWAK) is important for coactivator binding. Residues R192 and T320 each contribute to the 21-hydroxyprogesterone site. 2 residues coordinate aldosterone: R192 and T320. Residues R192 and T320 each contribute to the progesterone site.

It belongs to the nuclear hormone receptor family. NR3 subfamily.

It localises to the cytoplasm. Its subcellular location is the nucleus. In terms of biological role, receptor for both mineralocorticoids (MC) such as cortisol. Binds to mineralocorticoid response elements (MRE) and transactivates target genes. The effect of MC is to increase ion and water transport and thus raise extracellular fluid volume and blood pressure and lower potassium levels. This chain is Mineralocorticoid receptor (nr3c2), found in Oncorhynchus mykiss (Rainbow trout).